The sequence spans 230 residues: Cytidylate kinase (230 aa).

Residue Gly-12–Thr-20 participates in ATP binding.

The protein belongs to the cytidylate kinase family. Type 1 subfamily.

It localises to the cytoplasm. The catalysed reaction is CMP + ATP = CDP + ADP. The enzyme catalyses dCMP + ATP = dCDP + ADP. This chain is Cytidylate kinase, found in Yersinia pseudotuberculosis serotype O:1b (strain IP 31758).